The sequence spans 339 residues: Tetraacyldisaccharide 4'-kinase (339 aa).

53-60 is a binding site for ATP; the sequence is TCGGAGKT.

Belongs to the LpxK family.

The enzyme catalyses a lipid A disaccharide + ATP = a lipid IVA + ADP + H(+). The protein operates within glycolipid biosynthesis; lipid IV(A) biosynthesis; lipid IV(A) from (3R)-3-hydroxytetradecanoyl-[acyl-carrier-protein] and UDP-N-acetyl-alpha-D-glucosamine: step 6/6. In terms of biological role, transfers the gamma-phosphate of ATP to the 4'-position of a tetraacyldisaccharide 1-phosphate intermediate (termed DS-1-P) to form tetraacyldisaccharide 1,4'-bis-phosphate (lipid IVA). The chain is Tetraacyldisaccharide 4'-kinase from Bartonella henselae (strain ATCC 49882 / DSM 28221 / CCUG 30454 / Houston 1) (Rochalimaea henselae).